Here is a 270-residue protein sequence, read N- to C-terminus: Lipopolysaccharide core biosynthesis glycosyltransferase LpsC (270 aa).

It belongs to the glycosyltransferase 2 family. WaaE/KdtX subfamily.

It functions in the pathway bacterial outer membrane biogenesis; LPS core biosynthesis. The chain is Lipopolysaccharide core biosynthesis glycosyltransferase LpsC (lpsC) from Rhizobium meliloti (strain 1021) (Ensifer meliloti).